Here is a 481-residue protein sequence, read N- to C-terminus: Proline--tRNA ligase (481 aa).

The protein belongs to the class-II aminoacyl-tRNA synthetase family. ProS type 3 subfamily. Homodimer.

It is found in the cytoplasm. The catalysed reaction is tRNA(Pro) + L-proline + ATP = L-prolyl-tRNA(Pro) + AMP + diphosphate. Catalyzes the attachment of proline to tRNA(Pro) in a two-step reaction: proline is first activated by ATP to form Pro-AMP and then transferred to the acceptor end of tRNA(Pro). The protein is Proline--tRNA ligase of Pelodictyon phaeoclathratiforme (strain DSM 5477 / BU-1).